Here is a 380-residue protein sequence, read N- to C-terminus: Histidinol-phosphate aminotransferase (380 aa).

Lys-235 is modified (N6-(pyridoxal phosphate)lysine).

This sequence belongs to the class-II pyridoxal-phosphate-dependent aminotransferase family. Histidinol-phosphate aminotransferase subfamily. In terms of assembly, homodimer. Requires pyridoxal 5'-phosphate as cofactor.

It carries out the reaction L-histidinol phosphate + 2-oxoglutarate = 3-(imidazol-4-yl)-2-oxopropyl phosphate + L-glutamate. The protein operates within amino-acid biosynthesis; L-histidine biosynthesis; L-histidine from 5-phospho-alpha-D-ribose 1-diphosphate: step 7/9. This is Histidinol-phosphate aminotransferase from Rhodococcus jostii (strain RHA1).